The primary structure comprises 380 residues: Cytochrome b (380 aa).

4 helical membrane-spanning segments follow: residues 34–54 (FGSL…LLAA), 78–99 (WLIR…YLHI), 114–134 (WNTG…GYVL), and 179–199 (FFTL…IHLT). His-84 and His-98 together coordinate heme b. Residues His-183 and His-197 each coordinate heme b. His-202 provides a ligand contact to a ubiquinone. Transmembrane regions (helical) follow at residues 227-247 (LKDI…ALFS), 289-309 (LGGV…PLLH), 321-341 (FSQL…WVGS), and 348-368 (FIII…ILFP).

The protein belongs to the cytochrome b family. The cytochrome bc1 complex contains 11 subunits: 3 respiratory subunits (MT-CYB, CYC1 and UQCRFS1), 2 core proteins (UQCRC1 and UQCRC2) and 6 low-molecular weight proteins (UQCRH/QCR6, UQCRB/QCR7, UQCRQ/QCR8, UQCR10/QCR9, UQCR11/QCR10 and a cleavage product of UQCRFS1). This cytochrome bc1 complex then forms a dimer. Heme b is required as a cofactor.

The protein resides in the mitochondrion inner membrane. In terms of biological role, component of the ubiquinol-cytochrome c reductase complex (complex III or cytochrome b-c1 complex) that is part of the mitochondrial respiratory chain. The b-c1 complex mediates electron transfer from ubiquinol to cytochrome c. Contributes to the generation of a proton gradient across the mitochondrial membrane that is then used for ATP synthesis. This chain is Cytochrome b (MT-CYB), found in Antigone rubicunda (Brolga crane).